The primary structure comprises 194 residues: dITP/XTP pyrophosphatase (194 aa).

Serine 7–lysine 12 contributes to the substrate binding site. Positions 38 and 67 each coordinate Mg(2+). Aspartate 67 (proton acceptor) is an active-site residue. Residues serine 68, phenylalanine 151 to aspartate 154, lysine 174, and histidine 179 to arginine 180 contribute to the substrate site.

It belongs to the HAM1 NTPase family. Homodimer. Requires Mg(2+) as cofactor.

It catalyses the reaction XTP + H2O = XMP + diphosphate + H(+). It carries out the reaction dITP + H2O = dIMP + diphosphate + H(+). The enzyme catalyses ITP + H2O = IMP + diphosphate + H(+). Its function is as follows. Pyrophosphatase that catalyzes the hydrolysis of nucleoside triphosphates to their monophosphate derivatives, with a high preference for the non-canonical purine nucleotides XTP (xanthosine triphosphate), dITP (deoxyinosine triphosphate) and ITP. Seems to function as a house-cleaning enzyme that removes non-canonical purine nucleotides from the nucleotide pool, thus preventing their incorporation into DNA/RNA and avoiding chromosomal lesions. This is dITP/XTP pyrophosphatase from Treponema denticola (strain ATCC 35405 / DSM 14222 / CIP 103919 / JCM 8153 / KCTC 15104).